Here is a 949-residue protein sequence, read N- to C-terminus: Translation initiation factor IF-2 (949 aa).

2 disordered regions span residues 50-206 (FTEK…GAAR) and 220-359 (QNAE…TERK). Basic and acidic residues-rich tracts occupy residues 52–84 (EKPK…KVEK) and 104–143 (FKAE…DQGS). 2 stretches are compositionally biased toward polar residues: residues 144–154 (KNRNFNKSQGQ) and 164–180 (GSQQ…SNKP). Over residues 187–206 (NAANRNQNNSQQERQVGAAR) the composition is skewed to low complexity. Residues 224–275 (YMRHKETQLREQEEARRLAERAKEEARLAAQKAAEEKAKEAEKAAKTERFEP) show a composition bias toward basic and acidic residues. Low complexity predominate over residues 319 to 336 (KSWNNQNQVRNQRNSNWN). Residues 450–619 (ERAPVVTIMG…LLVAEVEELK (170 aa)) enclose the tr-type G domain. Residues 459–466 (GHVDHGKT) form a G1 region. Residue 459 to 466 (GHVDHGKT) participates in GTP binding. A G2 region spans residues 484 to 488 (GITQH). The interval 505-508 (DTPG) is G3. GTP is bound by residues 505-509 (DTPGH) and 559-562 (NKID). Positions 559–562 (NKID) are G4. A G5 region spans residues 595 to 597 (SAK).

It belongs to the TRAFAC class translation factor GTPase superfamily. Classic translation factor GTPase family. IF-2 subfamily.

It localises to the cytoplasm. In terms of biological role, one of the essential components for the initiation of protein synthesis. Protects formylmethionyl-tRNA from spontaneous hydrolysis and promotes its binding to the 30S ribosomal subunits. Also involved in the hydrolysis of GTP during the formation of the 70S ribosomal complex. The chain is Translation initiation factor IF-2 from Streptococcus uberis (strain ATCC BAA-854 / 0140J).